A 144-amino-acid polypeptide reads, in one-letter code: MDLNKYVQEVSLQDFGKEFRHVAIWNRRLRSTGGRFFPRDGHLDFNPKHLEEQGLEVFRKIVRHELCHYHLYFEKKGYRHGDRDFKELLAAVDGLRYAPQLEQATKPSLIYCCQSCGQVYQRKRRIDLKKYRCGKCRGKLTLKE.

The region spanning 4–143 (NKYVQEVSLQ…GKCRGKLTLK (140 aa)) is the SprT-like domain. Zn(2+) is bound at residue His64. Glu65 is an active-site residue. Position 68 (His68) interacts with Zn(2+).

It belongs to the SprT family. Zn(2+) serves as cofactor.

It localises to the cytoplasm. The sequence is that of Protein SprT-like from Streptococcus suis (strain 98HAH33).